A 176-amino-acid polypeptide reads, in one-letter code: Ribosome rescue factor SmrB (176 aa).

One can recognise a Smr domain in the interval 97 to 172 (LDMHGMTQQE…GDGALLVLLS (76 aa)).

This sequence belongs to the SmrB family. Associates with collided ribosomes, but not with correctly translating polysomes.

In terms of biological role, acts as a ribosome collision sensor. Detects stalled/collided disomes (pairs of ribosomes where the leading ribosome is stalled and a second ribosome has collided with it) and endonucleolytically cleaves mRNA at the 5' boundary of the stalled ribosome. Stalled/collided disomes form a new interface (primarily via the 30S subunits) that binds SmrB. Cleaved mRNA becomes available for tmRNA ligation, leading to ribosomal subunit dissociation and rescue of stalled ribosomes. This Vibrio vulnificus (strain CMCP6) protein is Ribosome rescue factor SmrB.